Reading from the N-terminus, the 182-residue chain is Large ribosomal subunit protein uL6 (182 aa).

Belongs to the universal ribosomal protein uL6 family. As to quaternary structure, part of the 50S ribosomal subunit.

Its function is as follows. This protein binds to the 23S rRNA, and is important in its secondary structure. It is located near the subunit interface in the base of the L7/L12 stalk, and near the tRNA binding site of the peptidyltransferase center. This Methanococcus maripaludis (strain C5 / ATCC BAA-1333) protein is Large ribosomal subunit protein uL6.